A 444-amino-acid polypeptide reads, in one-letter code: Homocysteine/cysteine synthase (444 aa).

At Ser44 the chain carries Phosphoserine. Lys160 is covalently cross-linked (Glycyl lysine isopeptide (Lys-Gly) (interchain with G-Cter in ubiquitin)). The residue at position 209 (Lys209) is an N6-(pyridoxal phosphate)lysine.

The protein belongs to the trans-sulfuration enzymes family. In terms of assembly, homotetramer. Requires pyridoxal 5'-phosphate as cofactor.

The protein localises to the cytoplasm. The catalysed reaction is O-acetyl-L-homoserine + methanethiol = L-methionine + acetate + H(+). The enzyme catalyses O-acetyl-L-homoserine + hydrogen sulfide = L-homocysteine + acetate. It carries out the reaction O-acetyl-L-serine + hydrogen sulfide = L-cysteine + acetate. It functions in the pathway amino-acid biosynthesis; L-methionine biosynthesis via de novo pathway; L-homocysteine from O-acetyl-L-homoserine. Its function is as follows. Catalyzes the conversion of O-acetyl-L-homoserine (OAH) into homocysteine in the methionine biosynthesis pathway. Required to efficiently reduce toxic levels of hydrogen sulfide generated when the sulfate assimilation pathway (SAP) is active. Also catalyzes the conversion of O-acetylserine (OAS) into cysteine, the last step in the cysteine biosynthesis pathway. However, it seems that in S.cerevisiae cysteine biosynthesis occurs exclusively through the cystathionine pathway and not via direct incorporation of sulfur into OAS. It therefore has no metabolic role in cysteine biosynthesis and may only have a regulatory role controlling OAS levels. The sequence is that of Homocysteine/cysteine synthase from Saccharomyces cerevisiae (strain ATCC 204508 / S288c) (Baker's yeast).